Consider the following 351-residue polypeptide: DNA polymerase IV (351 aa).

The 182-residue stretch at 4–185 (IIHVDMDCFF…LPLEKIPGVG (182 aa)) folds into the UmuC domain. Residues Asp-8 and Asp-103 each contribute to the Mg(2+) site. Glu-104 is an active-site residue.

This sequence belongs to the DNA polymerase type-Y family. In terms of assembly, monomer. The cofactor is Mg(2+).

It localises to the cytoplasm. It carries out the reaction DNA(n) + a 2'-deoxyribonucleoside 5'-triphosphate = DNA(n+1) + diphosphate. In terms of biological role, poorly processive, error-prone DNA polymerase involved in untargeted mutagenesis. Copies undamaged DNA at stalled replication forks, which arise in vivo from mismatched or misaligned primer ends. These misaligned primers can be extended by PolIV. Exhibits no 3'-5' exonuclease (proofreading) activity. May be involved in translesional synthesis, in conjunction with the beta clamp from PolIII. This chain is DNA polymerase IV, found in Shigella flexneri.